We begin with the raw amino-acid sequence, 83 residues long: Small ribosomal subunit protein uS17 (83 aa).

This sequence belongs to the universal ribosomal protein uS17 family. Part of the 30S ribosomal subunit.

In terms of biological role, one of the primary rRNA binding proteins, it binds specifically to the 5'-end of 16S ribosomal RNA. The protein is Small ribosomal subunit protein uS17 of Pseudoalteromonas atlantica (strain T6c / ATCC BAA-1087).